Consider the following 473-residue polypeptide: 3-isopropylmalate dehydratase large subunit (473 aa).

[4Fe-4S] cluster contacts are provided by C355, C415, and C418. The disordered stretch occupies residues 423-452 (PDQLAPGERSASTSNRNFEGRQGKGGRTHL).

Belongs to the aconitase/IPM isomerase family. LeuC type 1 subfamily. In terms of assembly, heterodimer of LeuC and LeuD. It depends on [4Fe-4S] cluster as a cofactor.

The catalysed reaction is (2R,3S)-3-isopropylmalate = (2S)-2-isopropylmalate. Its pathway is amino-acid biosynthesis; L-leucine biosynthesis; L-leucine from 3-methyl-2-oxobutanoate: step 2/4. Its function is as follows. Catalyzes the isomerization between 2-isopropylmalate and 3-isopropylmalate, via the formation of 2-isopropylmaleate. The chain is 3-isopropylmalate dehydratase large subunit from Corynebacterium jeikeium (strain K411).